The primary structure comprises 911 residues: Nitrate reductase [NADH], clone PBNBR1412 (911 aa).

Residues 53–72 are disordered; that stretch reads NDAVDDSYDSSDDEDESHNR. The segment covering 56–68 has biased composition (acidic residues); that stretch reads VDDSYDSSDDEDE. A Mo-molybdopterin-binding site is contributed by Cys191. Residues 539-614 form the Cytochrome b5 heme-binding domain; that stretch reads AKMYSMSEVR…LEDYRIGELI (76 aa). The heme site is built by His574 and His597. One can recognise an FAD-binding FR-type domain in the interval 654 to 766; sequence REKVPVTLIE…KGPLGHIEYL (113 aa). Residues 706–709, 723–727, Phe728, Phe735, 740–742, and Thr793 contribute to the FAD site; these read RAYT, VVKVY, and LMS.

It belongs to the nitrate reductase family. Homodimer. Requires FAD as cofactor. It depends on heme as a cofactor. Mo-molybdopterin serves as cofactor.

The enzyme catalyses nitrite + NAD(+) + H2O = nitrate + NADH + H(+). In terms of biological role, nitrate reductase is a key enzyme involved in the first step of nitrate assimilation in plants, fungi and bacteria. In Brassica napus (Rape), this protein is Nitrate reductase [NADH], clone PBNBR1412 (NIA2).